Reading from the N-terminus, the 223-residue chain is Regulator of G-protein signaling 19 (223 aa).

Residues 1 to 30 (MPTPPEAEKQQTGPEEADQPPSMSSHDAAP) form a disordered region. A compositionally biased stretch (low complexity) spans 20-29 (PPSMSSHDAA). A phosphoserine mark is found at Ser-24 and Ser-103. In terms of domain architecture, RGS spans 96-212 (SFDKLMHSPA…LSSPAYRALL (117 aa)). A Phosphoserine; by MAPK1 and MAPK3 modification is found at Ser-157. The interaction with GIPC stretch occupies residues 213–223 (LQGASQSSSEA).

Interacts with GIPC PDZ domain. Interacts with GNAO1. Post-translationally, fatty acylated. Heavily palmitoylated in the cysteine string motif. In terms of processing, phosphorylated, mainly on serine residues.

Its subcellular location is the membrane. Functionally, inhibits signal transduction by increasing the GTPase activity of G protein alpha subunits thereby driving them into their inactive GDP-bound form. Binds to G-alpha subfamily 1 members, with the order G(i)a3 &gt; G(i)a1 &gt; G(o)a &gt;&gt; G(z)a/G(i)a2. Activity on G(z)-alpha is inhibited by phosphorylation and palmitoylation of the G-protein. The chain is Regulator of G-protein signaling 19 (RGS19) from Bos taurus (Bovine).